The primary structure comprises 149 residues: Cytochrome c-type biogenesis protein CcmE (149 aa).

The Cytoplasmic portion of the chain corresponds to 1–7 (MKPRHKK). A helical; Signal-anchor for type II membrane protein transmembrane segment spans residues 8 to 28 (MAVIALSVSALTVAVVLVLNA). The Periplasmic portion of the chain corresponds to 29–149 (FQSNLVFFFS…AKAQKTSLAQ (121 aa)). Residues His123 and Tyr127 each contribute to the heme site.

It belongs to the CcmE/CycJ family.

The protein localises to the cell inner membrane. In terms of biological role, heme chaperone required for the biogenesis of c-type cytochromes. Transiently binds heme delivered by CcmC and transfers the heme to apo-cytochromes in a process facilitated by CcmF and CcmH. This chain is Cytochrome c-type biogenesis protein CcmE, found in Nitrosomonas europaea (strain ATCC 19718 / CIP 103999 / KCTC 2705 / NBRC 14298).